Consider the following 230-residue polypeptide: 7-cyano-7-deazaguanine synthase (230 aa).

14-24 (LSGGLDSTTTL) lines the ATP pocket. The Zn(2+) site is built by C194, C204, C207, and C210.

Belongs to the QueC family. The cofactor is Zn(2+).

It carries out the reaction 7-carboxy-7-deazaguanine + NH4(+) + ATP = 7-cyano-7-deazaguanine + ADP + phosphate + H2O + H(+). The protein operates within purine metabolism; 7-cyano-7-deazaguanine biosynthesis. Catalyzes the ATP-dependent conversion of 7-carboxy-7-deazaguanine (CDG) to 7-cyano-7-deazaguanine (preQ(0)). The sequence is that of 7-cyano-7-deazaguanine synthase from Ruthia magnifica subsp. Calyptogena magnifica.